Reading from the N-terminus, the 754-residue chain is ToMV resistance protein Tm-1(GCR237) (754 aa).

An N-terminal inhibitory domain NN region spans residues 1 to 201; sequence MATAQSNSPR…AGMVIGRLES (201 aa). Residues 18–20, Thr55, Arg92, and 124–127 each bind ATP; these read DTK and GSGG. The tract at residues 211-431 is N-terminal inhibitory domain NC; sequence KFTVGVTMFG…VDSFLEISPK (221 aa).

The protein belongs to the UPF0261 family. In terms of assembly, homodimer. (Microbial infection) Binds, via an ATP bridge, to the tobamoviruses avirulent (Avr) replication proteins (large and small subunits, e.g. tomato mosaic virus (ToMV/TMV) AC P03587, tobacco mild green mosaic virus (TMGMV) AC P18339 and pepper mild mottle virus (PMMoV) AC P89657) to inhibit their function after the translation of tobamoviruses RNA, but before the viral replication complex formation on the membrane surfaces; this interaction is not possible with resistance-breaking strains replication proteins.

Functionally, inhibitor of viral RNA replication which confers resistance to some tobamoviruses including tomato mosaic virus (ToMV) (e.g. isolate L), tobacco mosaic virus (TMV), tobacco mild green mosaic virus (TMGMV) and pepper mild mottle virus (PMMoV), but not to resistance-breaking isolates of ToMV (e.g. LT1, SL-1 and ToMV1-2) and tomato brown rugose fruit virus (ToBRFV). Prevents tobamoviruses RNA replication by affecting the association of tobamoviruses replication proteins (large and small subunits) with host membrane-associated proteins (e.g. TOM1, TOM2A and ARL8), thus inhibiting the replication complex formation on the membranes and avoiding viral negative-strand RNA synthesis. Inhibits triphosphatase activity of ToMV replication proteins. This Solanum lycopersicum (Tomato) protein is ToMV resistance protein Tm-1(GCR237).